A 304-amino-acid chain; its full sequence is 33 kDa chaperonin (304 aa).

Cystine bridges form between Cys236/Cys238 and Cys269/Cys272.

Belongs to the HSP33 family. In terms of processing, under oxidizing conditions two disulfide bonds are formed involving the reactive cysteines. Under reducing conditions zinc is bound to the reactive cysteines and the protein is inactive.

It localises to the cytoplasm. Its function is as follows. Redox regulated molecular chaperone. Protects both thermally unfolding and oxidatively damaged proteins from irreversible aggregation. Plays an important role in the bacterial defense system toward oxidative stress. This is 33 kDa chaperonin from Pelobacter propionicus (strain DSM 2379 / NBRC 103807 / OttBd1).